A 141-amino-acid chain; its full sequence is Nucleoside diphosphate kinase (141 aa).

ATP contacts are provided by Lys-11, Phe-59, Arg-87, Thr-93, Arg-104, and Asn-114. His-117 functions as the Pros-phosphohistidine intermediate in the catalytic mechanism.

Belongs to the NDK family. As to quaternary structure, homotetramer. Mg(2+) serves as cofactor.

It is found in the cytoplasm. It catalyses the reaction a 2'-deoxyribonucleoside 5'-diphosphate + ATP = a 2'-deoxyribonucleoside 5'-triphosphate + ADP. The enzyme catalyses a ribonucleoside 5'-diphosphate + ATP = a ribonucleoside 5'-triphosphate + ADP. Major role in the synthesis of nucleoside triphosphates other than ATP. The ATP gamma phosphate is transferred to the NDP beta phosphate via a ping-pong mechanism, using a phosphorylated active-site intermediate. The sequence is that of Nucleoside diphosphate kinase from Albidiferax ferrireducens (strain ATCC BAA-621 / DSM 15236 / T118) (Rhodoferax ferrireducens).